We begin with the raw amino-acid sequence, 301 residues long: Phosphatidylserine decarboxylase proenzyme (301 aa).

Catalysis depends on charge relay system; for autoendoproteolytic cleavage activity residues aspartate 117, histidine 173, and serine 260. Catalysis depends on serine 260, which acts as the Schiff-base intermediate with substrate; via pyruvic acid; for decarboxylase activity. Serine 260 carries the pyruvic acid (Ser); by autocatalysis modification.

It belongs to the phosphatidylserine decarboxylase family. PSD-B subfamily. Prokaryotic type II sub-subfamily. Heterodimer of a large membrane-associated beta subunit and a small pyruvoyl-containing alpha subunit. The cofactor is pyruvate. In terms of processing, is synthesized initially as an inactive proenzyme. Formation of the active enzyme involves a self-maturation process in which the active site pyruvoyl group is generated from an internal serine residue via an autocatalytic post-translational modification. Two non-identical subunits are generated from the proenzyme in this reaction, and the pyruvate is formed at the N-terminus of the alpha chain, which is derived from the carboxyl end of the proenzyme. The autoendoproteolytic cleavage occurs by a canonical serine protease mechanism, in which the side chain hydroxyl group of the serine supplies its oxygen atom to form the C-terminus of the beta chain, while the remainder of the serine residue undergoes an oxidative deamination to produce ammonia and the pyruvoyl prosthetic group on the alpha chain. During this reaction, the Ser that is part of the protease active site of the proenzyme becomes the pyruvoyl prosthetic group, which constitutes an essential element of the active site of the mature decarboxylase.

Its subcellular location is the cell membrane. The enzyme catalyses a 1,2-diacyl-sn-glycero-3-phospho-L-serine + H(+) = a 1,2-diacyl-sn-glycero-3-phosphoethanolamine + CO2. It participates in phospholipid metabolism; phosphatidylethanolamine biosynthesis; phosphatidylethanolamine from CDP-diacylglycerol: step 2/2. Its function is as follows. Catalyzes the formation of phosphatidylethanolamine (PtdEtn) from phosphatidylserine (PtdSer). This is Phosphatidylserine decarboxylase proenzyme from Chlamydia trachomatis serovar L2 (strain ATCC VR-902B / DSM 19102 / 434/Bu).